The sequence spans 319 residues: L-threo-3-hydroxyaspartate ammonia-lyase (319 aa).

Lys53 carries the N6-(pyridoxal phosphate)lysine modification. Residues Asn80, 179–183, and Thr304 each bind pyridoxal 5'-phosphate; that span reads GGGGM.

It belongs to the serine/threonine dehydratase family. May be either a monomer or a homodimer. Pyridoxal 5'-phosphate is required as a cofactor. Mn(2+) serves as cofactor. The cofactor is Mg(2+). Requires Ca(2+) as cofactor.

The enzyme catalyses (3S)-3-hydroxy-L-aspartate = oxaloacetate + NH4(+). Its activity is regulated as follows. Is strongly inhibited by hydroxylamine and EDTA in vitro. Catalyzes the deamination of L-threo-3-hydroxyaspartate to oxaloacetate and ammonia. Shows a high specificity towards L-threo-3-hydroxyaspartate as other 3-hydroxyaminoacids, i.e. D,L-erythro- and D-threo-3-hydroxyaspartate, D-threonine, L-threonine, D,L-allothreonine, D,L-threo-3-phenylserine, D-serine, and L-serine, are not substrates for this enzyme. Exhibits no detectable serine and aspartate racemase activity. Might play a role in the detoxification of naturally occurring 3-hydroxyaspartate in Pseudomonas sp. T62 cells. The polypeptide is L-threo-3-hydroxyaspartate ammonia-lyase (Pseudomonas sp).